Reading from the N-terminus, the 180-residue chain is Cytidylate kinase 2 (180 aa).

Residue 7-15 (GKSGCGNTT) coordinates ATP.

It belongs to the cytidylate kinase family. Type 2 subfamily.

Its subcellular location is the cytoplasm. It catalyses the reaction CMP + ATP = CDP + ADP. The catalysed reaction is dCMP + ATP = dCDP + ADP. The sequence is that of Cytidylate kinase 2 (cmk2) from Borreliella burgdorferi (strain ATCC 35210 / DSM 4680 / CIP 102532 / B31) (Borrelia burgdorferi).